The following is a 123-amino-acid chain: Cholecystokinin A (123 aa).

The N-terminal stretch at Met1 to Ala20 is a signal peptide. The propeptide occupies His21 to Arg103. Sulfotyrosine is present on Tyr105. Phe111 carries the phenylalanine amide modification. Residues Ser115–Ser123 constitute a propeptide that is removed on maturation.

This sequence belongs to the gastrin/cholecystokinin family. Post-translationally, the precursor is cleaved by proteases to produce a number of active cholecystokinins. As to expression, brain, gastrointestinal tract and lung.

It is found in the secreted. The chain is Cholecystokinin A (cck-a) from Xenopus laevis (African clawed frog).